The primary structure comprises 504 residues: Hydroxyisobutyraldehyde dehydrogenase (504 aa).

The active-site Proton acceptor is the Glu260. Cys294 acts as the Nucleophile in catalysis.

This sequence belongs to the aldehyde dehydrogenase family.

The protein resides in the cytoplasm. The enzyme catalyses 2-hydroxy-2-methylpropanal + NAD(+) + H2O = 2-hydroxy-2-methylpropanoate + NADH + 2 H(+). In terms of biological role, involved in the degradation of methyl tert-butyl ether (MTBE). Catalyzes the conversion of hydroxyisobutyraldehyde to hydroxyisobutyric acid (HIBA). The sequence is that of Hydroxyisobutyraldehyde dehydrogenase from Mycolicibacterium austroafricanum (Mycobacterium austroafricanum).